A 431-amino-acid chain; its full sequence is Dihydroorotase (431 aa).

Residues H55 and H57 each contribute to the Zn(2+) site. Substrate-binding positions include 57 to 59 (HFR) and N89. Residues K139, H169, H223, and D290 each coordinate Zn(2+). An N6-carboxylysine modification is found at K139. D290 is an active-site residue. Substrate is bound by residues H294 and 308–309 (PG).

The protein belongs to the metallo-dependent hydrolases superfamily. DHOase family. Class I DHOase subfamily. It depends on Zn(2+) as a cofactor.

The catalysed reaction is (S)-dihydroorotate + H2O = N-carbamoyl-L-aspartate + H(+). It functions in the pathway pyrimidine metabolism; UMP biosynthesis via de novo pathway; (S)-dihydroorotate from bicarbonate: step 3/3. Functionally, catalyzes the reversible cyclization of carbamoyl aspartate to dihydroorotate. The chain is Dihydroorotase from Methanothermobacter thermautotrophicus (strain ATCC 29096 / DSM 1053 / JCM 10044 / NBRC 100330 / Delta H) (Methanobacterium thermoautotrophicum).